The following is a 193-amino-acid chain: Ion-translocating oxidoreductase complex subunit A (193 aa).

6 helical membrane-spanning segments follow: residues 5–25, 39–59, 62–82, 102–122, 134–154, and 171–191; these read ALLFVSILLVNNFVLVKFLGL, IGMGMATTFVMTLGSMFSWLI, FILVPLDILYLRTMAFILVLA, LLGIFLPLITTNCAVLGVVLL, TIYGFGGAAGFSLVMVLFAAI, and SIALITAGLMSLAFMGFTGLV.

It belongs to the NqrDE/RnfAE family. The complex is composed of six subunits: RnfA, RnfB, RnfC, RnfD, RnfE and RnfG.

It localises to the cell inner membrane. Part of a membrane-bound complex that couples electron transfer with translocation of ions across the membrane. This chain is Ion-translocating oxidoreductase complex subunit A, found in Pectobacterium atrosepticum (strain SCRI 1043 / ATCC BAA-672) (Erwinia carotovora subsp. atroseptica).